The sequence spans 172 residues: Carotene biosynthesis-related protein CBR, chloroplastic (172 aa).

A disordered region spans residues 41 to 66; that stretch reads AENNPSTPPPSSPSPPPPPPTPAAPT. Over residues 46 to 63 the composition is skewed to pro residues; sequence STPPPSSPSPPPPPPTPA. 2 consecutive transmembrane segments (helical) span residues 111-131 and 152-172; these read PTLI…PAFA and FAMI…IALF.

Belongs to the ELIP/psbS family.

It is found in the plastid. Its subcellular location is the chloroplast membrane. In terms of biological role, putative zeaxanthin binding protein. That forms photoprotective complexes within the light-harvesting antennae. This chain is Carotene biosynthesis-related protein CBR, chloroplastic (CBR), found in Dunaliella salina (Green alga).